The primary structure comprises 472 residues: Tubulin gamma chain (472 aa).

142 to 148 (AGGTGSG) contributes to the GTP binding site.

This sequence belongs to the tubulin family.

The protein resides in the cytoplasm. It localises to the cytoskeleton. It is found in the microtubule organizing center. Its function is as follows. Tubulin is the major constituent of microtubules. The gamma chain is found at microtubule organizing centers (MTOC) such as the spindle poles, suggesting that it is involved in the minus-end nucleation of microtubule assembly. The protein is Tubulin gamma chain (TUBG) of Anemia phyllitidis (Fern).